The following is a 153-amino-acid chain: ORM1-like protein 3 (153 aa).

Topologically, residues 1–21 are cytoplasmic; that stretch reads MNVGTAHSEVNPNTRVMNSRG. 2 consecutive transmembrane segments (helical) span residues 22–42 and 43–63; these read IWLSYVLGIGLLHIILLSIPF and VSVPVVWTLTNLIHNMCMYIF. The Cytoplasmic segment spans residues 64 to 94; sequence LHTVKGTPFETPDQGKARLLTHWEQMDYGVQ. The chain crosses the membrane as a helical span at residues 95–117; it reads FTASRKFLTITPIILYFLTSFYT. Residues 118–121 lie on the Extracellular side of the membrane; it reads KYDR. The chain crosses the membrane as a helical span at residues 122-142; it reads VHFVINTISLLTVLIPKLPQF. Hydroxyproline is present on P137. Residues 143–153 lie on the Cytoplasmic side of the membrane; that stretch reads HGVRLFGINKY.

The protein belongs to the ORM family. In terms of assembly, ceramide-sensitive subunit of the serine palmitoyltransferase (SPT) complex, which is also composed of SPTLC1, SPTLC2/3 and SPTSSA/B. When hydroxylated at Pro-137, ubiquitinated via 'Lys-48'-linkage, leading to proteasomal degradation. In endothelial cells, ORMDL3 proteasomal degradation is controlled by the sphingosine 1-phosphate receptor signaling pathway.

It is found in the endoplasmic reticulum membrane. Plays an essential role in the homeostatic regulation of sphingolipid de novo biosynthesis by modulating the activity of the serine palmitoyltransferase (SPT) in response to ceramide levels. When complexed to SPT, the binding of ceramides to its N-terminus stabilizes a conformation that block SPT substrate entry, hence preventing SPT catalytic activity. Through this mechanism, maintains ceramide levels at sufficient concentrations for the production of complex sphingolipids, but which prevents the accumulation of ceramides to levels that trigger apoptosis. The polypeptide is ORM1-like protein 3 (ormdl3) (Danio rerio (Zebrafish)).